The chain runs to 190 residues: MIDPDGYRPNVGIVLIRRDGQVFWGRRVRRDGWQFPQGGMHSDETPVEAMYRELNEETGLLPEHVQLVGATPGWLRYRLPSQAVRCNRSQMCIGQKQVWFLLQLIGDESHVQLDQSENPEFDHWRWVSFWYPIEHVVMFKRSVYARALCQLASLAQQVVGLEVGTMPQYVQDICLLNVGYKHLPNWVSRY.

Positions 6-149 (GYRPNVGIVL…KRSVYARALC (144 aa)) constitute a Nudix hydrolase domain. Positions 38–59 (GGMHSDETPVEAMYRELNEETG) match the Nudix box motif.

Belongs to the Nudix hydrolase family. RppH subfamily. Requires a divalent metal cation as cofactor.

In terms of biological role, accelerates the degradation of transcripts by removing pyrophosphate from the 5'-end of triphosphorylated RNA, leading to a more labile monophosphorylated state that can stimulate subsequent ribonuclease cleavage. The sequence is that of RNA pyrophosphohydrolase from Xylella fastidiosa (strain Temecula1 / ATCC 700964).